Reading from the N-terminus, the 326-residue chain is MLSPERLALPDYEYLAQRHVLTYVEDAVCQLLENKEDISQYGIARFFTEYFNSVCQGTHILFREFSFIQATPHNRASFLRAFWRCFRTVGKNGDLLTMREYHCLLQLLCPDFPLELTQKAARIVLMDDAMDCLMSFSDFLFAFQIQFYYSEFLESVAAIYQDLLSGKNPNTVIVPTSSSGQHRHRPSTGEAGTPEGVEASLFYQCLENLCDRHKYSCPPPALVKEVLSNVQRLTFYGFLVALSKHHGINQALGALPDKGDLMHDPAMDEELERLVLRWRPHRSSRQHRAKEPGAFGYQRRDKLEALQTVPPASAPTPCLYQWEPIE.

Residues 1-111 (MLSPERLALP…HCLLQLLCPD (111 aa)) form a required for interaction with PCM1 region. Residues 1-225 (MLSPERLALP…SCPPPALVKE (225 aa)) are required for interaction with TPGS1, LRRC49, and TTLL1.

This sequence belongs to the CSTPP1 family. In terms of assembly, interacts with PCM1. Interacts with TTLL1, TPGS1, TPGS2 and LRRC49; the interactions link CSTPP1 to the complex TPGC. Binds to alpha-tubulin.

Its subcellular location is the cytoplasm. The protein localises to the cytoskeleton. It is found in the microtubule organizing center. It localises to the centrosome. The protein resides in the centriolar satellite. Functionally, regulator of the tubulin polyglutamylase complex (TPGC) that controls cytoskeletal organization, nuclear shape, and cilium disassembly by balancing microtubule and actin assembly. Regulates the assembly and stability of the TPGC and thereby modulates polyglutamylation of the microtubule, which antagonizes MAP4 binding. This chain is Centriolar satellite-associated tubulin polyglutamylase complex regulator 1 (CSTPP1), found in Bos taurus (Bovine).